The following is a 258-amino-acid chain: Proteasome subunit alpha type-3 (258 aa).

Residues Lys-100, Lys-199, and Lys-231 each participate in a glycyl lysine isopeptide (Lys-Gly) (interchain with G-Cter in ubiquitin) cross-link.

It belongs to the peptidase T1A family. As to quaternary structure, the 26S proteasome consists of a 20S proteasome core and two 19S regulatory subunits. The 20S proteasome core is composed of 28 subunits that are arranged in four stacked rings, resulting in a barrel-shaped structure. The two end rings are each formed by seven alpha subunits, and the two central rings are each formed by seven beta subunits. The catalytic chamber with the active sites is on the inside of the barrel.

The protein resides in the cytoplasm. It is found in the nucleus. Its function is as follows. The proteasome degrades poly-ubiquitinated proteins in the cytoplasm and in the nucleus. It is essential for the regulated turnover of proteins and for the removal of misfolded proteins. The proteasome is a multicatalytic proteinase complex that is characterized by its ability to cleave peptides with Arg, Phe, Tyr, Leu, and Glu adjacent to the leaving group at neutral or slightly basic pH. It has an ATP-dependent proteolytic activity. This chain is Proteasome subunit alpha type-3 (PRE9), found in Saccharomyces cerevisiae (strain ATCC 204508 / S288c) (Baker's yeast).